We begin with the raw amino-acid sequence, 263 residues long: Pyrroline-5-carboxylate reductase (263 aa).

Belongs to the pyrroline-5-carboxylate reductase family.

The protein resides in the cytoplasm. It catalyses the reaction L-proline + NADP(+) = (S)-1-pyrroline-5-carboxylate + NADPH + 2 H(+). It carries out the reaction L-proline + NAD(+) = (S)-1-pyrroline-5-carboxylate + NADH + 2 H(+). The protein operates within amino-acid biosynthesis; L-proline biosynthesis; L-proline from L-glutamate 5-semialdehyde: step 1/1. Catalyzes the reduction of 1-pyrroline-5-carboxylate (PCA) to L-proline. The chain is Pyrroline-5-carboxylate reductase from Treponema pallidum (strain Nichols).